The chain runs to 482 residues: Bifunctional protein HldE (482 aa).

The tract at residues 1–322 (MFGLESKSPK…QYIHTQPSNL (322 aa)) is ribokinase. Residue 198–201 (NKKE) coordinates ATP. Residue D267 is part of the active site. The interval 350–482 (FTNGCFDILH…IQRSKICKHS (133 aa)) is cytidylyltransferase.

In the N-terminal section; belongs to the carbohydrate kinase PfkB family. It in the C-terminal section; belongs to the cytidylyltransferase family. Homodimer.

It catalyses the reaction D-glycero-beta-D-manno-heptose 7-phosphate + ATP = D-glycero-beta-D-manno-heptose 1,7-bisphosphate + ADP + H(+). It carries out the reaction D-glycero-beta-D-manno-heptose 1-phosphate + ATP + H(+) = ADP-D-glycero-beta-D-manno-heptose + diphosphate. The protein operates within nucleotide-sugar biosynthesis; ADP-L-glycero-beta-D-manno-heptose biosynthesis; ADP-L-glycero-beta-D-manno-heptose from D-glycero-beta-D-manno-heptose 7-phosphate: step 1/4. It participates in nucleotide-sugar biosynthesis; ADP-L-glycero-beta-D-manno-heptose biosynthesis; ADP-L-glycero-beta-D-manno-heptose from D-glycero-beta-D-manno-heptose 7-phosphate: step 3/4. Its pathway is bacterial outer membrane biogenesis; LPS core biosynthesis. In terms of biological role, catalyzes the phosphorylation of D-glycero-D-manno-heptose 7-phosphate at the C-1 position to selectively form D-glycero-beta-D-manno-heptose-1,7-bisphosphate. Functionally, catalyzes the ADP transfer from ATP to D-glycero-beta-D-manno-heptose 1-phosphate, yielding ADP-D-glycero-beta-D-manno-heptose. The protein is Bifunctional protein HldE of Helicobacter hepaticus (strain ATCC 51449 / 3B1).